The chain runs to 302 residues: Pyridoxal kinase (302 aa).

Residues Ser-10, Thr-45, and Tyr-122 each coordinate substrate. ATP contacts are provided by residues 181–182 and 215–227; these read TS and VGPKFNDYYTGTG. Position 228 (Asp-228) interacts with substrate.

This sequence belongs to the pyridoxine kinase family. As to quaternary structure, homodimer. It depends on a divalent metal cation as a cofactor.

It is found in the cytoplasm. It catalyses the reaction pyridoxal + ATP = pyridoxal 5'-phosphate + ADP + H(+). Its pathway is cofactor metabolism; pyridoxal 5'-phosphate salvage; pyridoxal 5'-phosphate from pyridoxal: step 1/1. Functionally, required for synthesis of pyridoxal-5-phosphate from vitamin B6. The polypeptide is Pyridoxal kinase (pykA) (Dictyostelium discoideum (Social amoeba)).